The chain runs to 297 residues: ER membrane protein complex subunit 2 (297 aa).

Position 2 is an N-acetylalanine (Ala2). 3 TPR repeats span residues 87–120 (HRVK…DPTN), 155–188 (QEAW…NPYN), and 192–225 (CQQY…NNRN). N6-acetyllysine is present on Lys255.

Belongs to the EMC2 family. As to quaternary structure, component of the ER membrane protein complex (EMC).

The protein localises to the endoplasmic reticulum membrane. Functionally, part of the endoplasmic reticulum membrane protein complex (EMC) that enables the energy-independent insertion into endoplasmic reticulum membranes of newly synthesized membrane proteins. Preferentially accommodates proteins with transmembrane domains that are weakly hydrophobic or contain destabilizing features such as charged and aromatic residues. Involved in the cotranslational insertion of multi-pass membrane proteins in which stop-transfer membrane-anchor sequences become ER membrane spanning helices. It is also required for the post-translational insertion of tail-anchored/TA proteins in endoplasmic reticulum membranes. By mediating the proper cotranslational insertion of N-terminal transmembrane domains in an N-exo topology, with translocated N-terminus in the lumen of the ER, controls the topology of multi-pass membrane proteins like the G protein-coupled receptors. By regulating the insertion of various proteins in membranes, it is indirectly involved in many cellular processes. The protein is ER membrane protein complex subunit 2 of Bos taurus (Bovine).